We begin with the raw amino-acid sequence, 201 residues long: Small ribosomal subunit protein uS5 (201 aa).

Residues 1–28 are disordered; that stretch reads MARGEQQRGEGGQRRDRRDRNAPEERVD. An S5 DRBM domain is found at 31 to 94; it reads IVEKLVHINR…EEAKKTMIRV (64 aa). Residues 173 to 201 form a disordered region; that stretch reads QIAAKRGKKVGDILGRRADGASAPEAIEG. Positions 181 to 191 are enriched in basic and acidic residues; sequence KVGDILGRRAD.

The protein belongs to the universal ribosomal protein uS5 family. As to quaternary structure, part of the 30S ribosomal subunit. Contacts proteins S4 and S8.

With S4 and S12 plays an important role in translational accuracy. Functionally, located at the back of the 30S subunit body where it stabilizes the conformation of the head with respect to the body. The sequence is that of Small ribosomal subunit protein uS5 from Caulobacter vibrioides (strain ATCC 19089 / CIP 103742 / CB 15) (Caulobacter crescentus).